A 955-amino-acid chain; its full sequence is RNA polymerase-associated protein RapA (955 aa).

Positions 163–333 (EVGHRYAPRV…FARLRLLDPE (171 aa)) constitute a Helicase ATP-binding domain. Residue 176–183 (DEVGLGKT) coordinates ATP. Positions 279 to 282 (DEAH) match the DEAH box motif. The Helicase C-terminal domain occupies 478–642 (RVEWLLELLL…AVRDELFELL (165 aa)).

Belongs to the SNF2/RAD54 helicase family. RapA subfamily. In terms of assembly, interacts with the RNAP. Has a higher affinity for the core RNAP than for the holoenzyme. Its ATPase activity is stimulated by binding to RNAP.

In terms of biological role, transcription regulator that activates transcription by stimulating RNA polymerase (RNAP) recycling in case of stress conditions such as supercoiled DNA or high salt concentrations. Probably acts by releasing the RNAP, when it is trapped or immobilized on tightly supercoiled DNA. Does not activate transcription on linear DNA. Probably not involved in DNA repair. The polypeptide is RNA polymerase-associated protein RapA (Aeromonas hydrophila subsp. hydrophila (strain ATCC 7966 / DSM 30187 / BCRC 13018 / CCUG 14551 / JCM 1027 / KCTC 2358 / NCIMB 9240 / NCTC 8049)).